Here is a 304-residue protein sequence, read N- to C-terminus: Glycine--tRNA ligase alpha subunit (304 aa).

Belongs to the class-II aminoacyl-tRNA synthetase family. Tetramer of two alpha and two beta subunits.

The protein localises to the cytoplasm. The catalysed reaction is tRNA(Gly) + glycine + ATP = glycyl-tRNA(Gly) + AMP + diphosphate. This chain is Glycine--tRNA ligase alpha subunit, found in Serratia proteamaculans (strain 568).